We begin with the raw amino-acid sequence, 957 residues long: Exoribonuclease II, mitochondrial (957 aa).

The N-terminal 54 residues, 1 to 54 (MNYRQLFLLQNVNLESNYLLKRVCLSLKLSPCKLTRKFHHACPSSSKVLKYFRI), are a transit peptide targeting the mitochondrion. The RNB domain maps to 503–843 (RVDLRHLKAF…FTHHQIQSVL (341 aa)).

Belongs to the RNR ribonuclease family.

It is found in the mitochondrion. The catalysed reaction is Exonucleolytic cleavage in the 3'- to 5'-direction to yield nucleoside 5'-phosphates.. In terms of biological role, required for intron-independent turnover and processing of mitochondrial RNA. Participates in 3'-mtRNA processing where it hydrolyzes single-stranded RNA or partially double-stranded RNA with 3'-single-stranded tails. This is Exoribonuclease II, mitochondrial (rpm1) from Schizosaccharomyces pombe (strain 972 / ATCC 24843) (Fission yeast).